A 33-amino-acid polypeptide reads, in one-letter code: Photosystem II reaction center protein Psb30 (33 aa).

The chain crosses the membrane as a helical span at residues 5–25 (VIAQPIVLGLIVASGPLVIVS).

It belongs to the Psb30/Ycf12 family. In terms of assembly, PSII is composed of 1 copy each of membrane proteins PsbA, PsbB, PsbC, PsbD, PsbE, PsbF, PsbH, PsbI, PsbJ, PsbK, PsbL, PsbM, PsbT, PsbX, PsbY, PsbZ, Psb30/Ycf12, peripheral proteins of the oxygen-evolving complex and a large number of cofactors. It forms dimeric complexes.

The protein resides in the plastid membrane. A core subunit of photosystem II (PSII), probably helps stabilize the reaction center. This is Photosystem II reaction center protein Psb30 from Aneura mirabilis (Parasitic liverwort).